We begin with the raw amino-acid sequence, 201 residues long: Recombination protein RecR (201 aa).

A C4-type zinc finger spans residues 57–72 (CECCRTLTEEPLCRIC). Residues 81–176 (GVLCIVETPA…NTTRIAHGVP (96 aa)) enclose the Toprim domain.

The protein belongs to the RecR family.

Its function is as follows. May play a role in DNA repair. It seems to be involved in an RecBC-independent recombinational process of DNA repair. It may act with RecF and RecO. This chain is Recombination protein RecR, found in Idiomarina loihiensis (strain ATCC BAA-735 / DSM 15497 / L2-TR).